The sequence spans 479 residues: Acyltransferase easC (479 aa).

His161 (proton acceptor) is an active-site residue.

Belongs to the plant acyltransferase family. Monomer.

It participates in antibiotic biosynthesis. Functionally, acyltransferase; part of the gene cluster that mediates the biosynthesis of emericellamides, secondary metabolites acting as antibiotics. The biosynthesis of emericellamides initiates from the highly reducing polyketide synthase easB which catalyzes the formation of the linear polyketide chain. EasB produces several polyketides that can be further processed by the downstream enzymes. The polyketides are released from easB as linear polyketide carboxylic acids, which are converted to CoA thioesters by the acyl-CoA ligase easD. The substrates are then loaded onto the acyltransferase easC, which shuttles them to the first thiolation (T) domain of the nonribosomal peptide synthetase easA. EasA then performs condensation of the polyketides with one glycine, two alanine, one valine and one leucine residues. A last step of cyclization leads to the production of emericellamides. In Emericella nidulans (strain FGSC A4 / ATCC 38163 / CBS 112.46 / NRRL 194 / M139) (Aspergillus nidulans), this protein is Acyltransferase easC.